We begin with the raw amino-acid sequence, 361 residues long: Cytosolic Fe-S cluster assembly factor CFD1 (361 aa).

Position 37 to 44 (37 to 44) interacts with ATP; it reads GKGGVGKS. [4Fe-4S] cluster-binding residues include C218 and C221. Residues 293 to 314 are disordered; the sequence is HSQSAAAQLPNSGDTESLTPAG.

It belongs to the Mrp/NBP35 ATP-binding proteins family. NUBP2/CFD1 subfamily. In terms of assembly, heterotetramer of 2 NBP35 and 2 CFD1 chains. [4Fe-4S] cluster is required as a cofactor.

It is found in the cytoplasm. Component of the cytosolic iron-sulfur (Fe/S) protein assembly (CIA) machinery. Required for maturation of extramitochondrial Fe-S proteins. The NBP35-CFD1 heterotetramer forms a Fe-S scaffold complex, mediating the de novo assembly of an Fe-S cluster and its transfer to target apoproteins. The sequence is that of Cytosolic Fe-S cluster assembly factor CFD1 from Mycosarcoma maydis (Corn smut fungus).